The sequence spans 340 residues: Anthranilate phosphoribosyltransferase (340 aa).

Residues Gly-83, 86-87, Thr-91, 93-96, 111-119, and Ser-123 contribute to the 5-phospho-alpha-D-ribose 1-diphosphate site; these read GD, NVST, and KHGNRSVSS. Gly-83 is an anthranilate binding site. Position 95 (Ser-95) interacts with Mg(2+). Asn-114 is an anthranilate binding site. Arg-169 lines the anthranilate pocket. Mg(2+) is bound by residues Asp-228 and Glu-229.

This sequence belongs to the anthranilate phosphoribosyltransferase family. Homodimer. Mg(2+) serves as cofactor.

The catalysed reaction is N-(5-phospho-beta-D-ribosyl)anthranilate + diphosphate = 5-phospho-alpha-D-ribose 1-diphosphate + anthranilate. It functions in the pathway amino-acid biosynthesis; L-tryptophan biosynthesis; L-tryptophan from chorismate: step 2/5. In terms of biological role, catalyzes the transfer of the phosphoribosyl group of 5-phosphorylribose-1-pyrophosphate (PRPP) to anthranilate to yield N-(5'-phosphoribosyl)-anthranilate (PRA). The sequence is that of Anthranilate phosphoribosyltransferase from Aquifex aeolicus (strain VF5).